The sequence spans 141 residues: Large ribosomal subunit protein uL23A (141 aa).

Residues Ser-68 and Ser-70 each carry the phosphoserine modification.

This sequence belongs to the universal ribosomal protein uL23 family. Component of the large ribosomal subunit (LSU). Mature yeast ribosomes consist of a small (40S) and a large (60S) subunit. The 40S small subunit contains 1 molecule of ribosomal RNA (18S rRNA) and at least 33 different proteins. The large 60S subunit contains 3 rRNA molecules (25S, 5.8S and 5S rRNA) and at least 46 different proteins. uL23 is associated with the polypeptide exit tunnel.

The protein resides in the cytoplasm. In terms of biological role, this protein binds to a specific region on the 26S rRNA. Functionally, component of the ribosome, a large ribonucleoprotein complex responsible for the synthesis of proteins in the cell. The small ribosomal subunit (SSU) binds messenger RNAs (mRNAs) and translates the encoded message by selecting cognate aminoacyl-transfer RNA (tRNA) molecules. The large subunit (LSU) contains the ribosomal catalytic site termed the peptidyl transferase center (PTC), which catalyzes the formation of peptide bonds, thereby polymerizing the amino acids delivered by tRNAs into a polypeptide chain. The nascent polypeptides leave the ribosome through a tunnel in the LSU and interact with protein factors that function in enzymatic processing, targeting, and the membrane insertion of nascent chains at the exit of the ribosomal tunnel. uL23 is a major component of the universal docking site for these factors at the polypeptide exit tunnel. This is Large ribosomal subunit protein uL23A (rpl2501) from Schizosaccharomyces pombe (strain 972 / ATCC 24843) (Fission yeast).